We begin with the raw amino-acid sequence, 721 residues long: Protein mu-NS (721 aa).

Residues 1–13 form an interaction with sigma-NS region; it reads MASFKGFSANTVP. Residues 1-38 form an RNA-binding region; the sequence is MASFKGFSANTVPVSKTRKDTSSLTATPGLRAPSMSSP. The segment at 14–40 is interaction with mu-2; the sequence is VSKTRKDTSSLTATPGLRAPSMSSPVD. Positions 17–37 are disordered; the sequence is TRKDTSSLTATPGLRAPSMSS. Residues 471–721 form an involved in the formation of factory-like inclusions region; the sequence is QSDTVDGIKL…IDFSVPADEL (251 aa). Coiled coils occupy residues 523 to 556 and 632 to 686; these read LLSQ…ADVK and KQAH…NQRQ.

This sequence belongs to the orthoreovirus mu-NS protein family. In terms of assembly, interacts with mu-2. Interacts with sigma-NS; in viral factories. Interacts with the inner capsid proteins lambda-1 and sigma-2, and outer capsid protein lambda-2; in viral factories. Post-translationally, the N-terminus is blocked.

It is found in the host cytoplasm. Its function is as follows. Non-structural protein implicated with protein sigma-NS in forming the matrix of viral factories, which are large inclusions in the host cytoplasm where replication intermediates are assembled and viral RNA replication takes place. Together with mu-2, recruits the other core proteins to these factories. The protein is Protein mu-NS (M3) of Mammalia (T2J).